The sequence spans 177 residues: Glutamyl-tRNA(Gln) amidotransferase subunit F, mitochondrial (177 aa).

Residues 1 to 16 constitute a mitochondrion transit peptide; the sequence is MIRINSRGLTVSTRRF. The tract at residues 148 to 177 is disordered; it reads PAKGETQGSFNVANMNPRNRPFATIRSKQG. Over residues 153 to 164 the composition is skewed to polar residues; it reads TQGSFNVANMNP.

The protein belongs to the GatF family. As to quaternary structure, subunit of the heterotrimeric GatFAB amidotransferase (AdT) complex, composed of A, B and F subunits.

Its subcellular location is the mitochondrion inner membrane. It carries out the reaction L-glutamyl-tRNA(Gln) + L-glutamine + ATP + H2O = L-glutaminyl-tRNA(Gln) + L-glutamate + ADP + phosphate + H(+). Its function is as follows. Allows the formation of correctly charged Gln-tRNA(Gln) through the transamidation of misacylated Glu-tRNA(Gln) in the mitochondria. The reaction takes place in the presence of glutamine and ATP through an activated gamma-phospho-Glu-tRNA(Gln). Required for proper protein synthesis within the mitochondrion. In Scheffersomyces stipitis (strain ATCC 58785 / CBS 6054 / NBRC 10063 / NRRL Y-11545) (Yeast), this protein is Glutamyl-tRNA(Gln) amidotransferase subunit F, mitochondrial.